The primary structure comprises 555 residues: 1,3-beta-glucanosyltransferase GAS2 (555 aa).

The first 24 residues, 1–24, serve as a signal peptide directing secretion; sequence MNKKQNFYAAIIVAIFLCLQLSHG. Residues Cys89 and Cys118 are joined by a disulfide bond. Residues Tyr107, 134-142, Asn175, Glu176, Asp217, and Arg222 each bind (1,3-beta-D-glucosyl)n; that span reads SEPDISINR. Catalysis depends on Glu176, which acts as the Proton donor. 6 cysteine pairs are disulfide-bonded: Cys231-Cys367, Cys247-Cys278, Cys390-Cys442, Cys392-Cys489, Cys399-Cys466, and Cys419-Cys424. The active-site Nucleophile is Glu275. Tyr307 is a binding site for (1,3-beta-D-glucosyl)n. An N-linked (GlcNAc...) asparagine glycan is attached at Asn498. The GPI-anchor amidated aspartate moiety is linked to residue Asp531. Residues 532 to 555 constitute a propeptide, removed in mature form; sequence GTIAFKTSGFVILLISMIAAGILL.

This sequence belongs to the glycosyl hydrolase 72 family. N-glycosylated.

It localises to the cell membrane. Splits internally a 1,3-beta-glucan molecule and transfers the newly generated reducing end (the donor) to the non-reducing end of another 1,3-beta-glucan molecule (the acceptor) forming a 1,3-beta linkage, resulting in the elongation of 1,3-beta-glucan chains in the cell wall. Involved in spore wall assembly. The chain is 1,3-beta-glucanosyltransferase GAS2 (GAS2) from Saccharomyces cerevisiae (strain ATCC 204508 / S288c) (Baker's yeast).